The primary structure comprises 4882 residues: MVTGCGAAPPGTVTERLPSVIVLSAGRKMAAAAAEASGPSCSSAAAAAGAGAAGVSEWLVLRDGCMRCDADGLHSLSYHPALNAILAVTSRGTIKVIDGTSGATLQASALSAKPGGQVKCQYISAVDKVIFVDDYAVGCRKDLNGILLLDTALQTPVSKQDDVVQLELPVTEAQQLLSACIEKIDVSSTEGYDLFITQLKDGLKNTSHETAANHKVAKWATVTFHLPHHVLKSIASAIVNELKKINQNVAALPVASSVMDRLSYLLPSARPELGVGPGRSVDRALMYSEANRRETFTSWPHVGYRWAQPDPMAQAGFYHQPASSGDDRAMCFTCSVCLVCWEPTDEPWSEHERHSPNCPFVKGEHTQNVPLSVTLATSPAQLPSADGADRIACFGSGSCPQFLAAATKRGKICIWDVSKLMKVHLKFEINAYDPAIVQQLILSGDPSSGVDSRRPTLAWLEDSSSCSDIPKLEGDSDDLLEDSDSEEHSRSDSVTGHTSQKEAMEVSLDITALSILQQPEKLQWEIVANVLEDTVKDLEELGANPSLTNSKSEKTKEKHQEQHNIPFPCLLAGGLLTYKSPATSPISSNSHRSLDGLSRTQGESISEQGSTDNESCTNSELNSPLVRRTLPVLLLYSIKESDEKAGKIFSQMNNIMSKSLHDDGFTVPQIIEMELDNQEQLLLQDPPVTYIQQFADAAASLTSPDSEKWNSVFPKPGALVQCLRLPKFAEEETLCIDSITPCADGIHLLVGLRTCSVESLSAINQVEALNNLNKLNSALCNRRKGDLESNLAVVNGANISVIQHESPADVPEHLLIRPEQRNVVSGGYLVLYKMNYTTRIVTLEEEPVKIQHIKDPQDTITSLILLPPDILDNREDDCEEPAEEMQLASKNGIEREKKSDISTLGHLVVTTQGGYVKVLDLSNFEILAKVEPPKKEGTEEQDTFVSVIYCSGTDRLCACTKGGELHFLQIGGTCDDIDEADILVDGSLSKGIEPALEGSRPLSNPSSPGISGVELLVDQPFTLEILTSLVELTRFETLTPRFSATVPPCWVEVQQEQQQRRHPQHLHQQHHGDAAQHTRTWKLQTDSNSWDEHVFELVLPKACMVGHVDFKFVLNSNITSVPQIQVTLLKNKAPGLGKANALNIEVEHNGNPSLVDLNEEMHHMDVEESQCLRLCPFLEDHKEDILCGPVWLASGLDLSGHAGMLTLTSPKLVKGMAGGKYRSFLIHVKAVSDRGAADEMCSSGLRPVVRLPSLKQQGHKGYSLASLLAKVAAGKEKSSNVKNENAGGTRKSENLRGCDLLQEVSVTIRRFKKTSICKERVQRCAMLQFSEFHEKLLNTLCRRSDDGQVTEHAQSLVLDALCWLAGVHSNGSGSSKEGNECLLSKTRKCLSDIVRVCFFEAGRSIAHKCARFLALCISNGKCEPCQPGFGSVLLKALLDNMCFLPAAATGGSVYWYFVLLNYVKDEDLAGCSTACAALLTAVSRQLQDRLTPLEALLQTRYGLYSSPFDPVLFDLEMSGSSWKTVYSSSTAVQSDEIDLSDVLSGNGRVSSCTAAEGSFTSLTGLLEVEPLHFTCVSTSDGTRIERDDASTFTVSSFGVPPAVGGLSSGTVGEASTALSSAAQVALQSLSHAMASAEQQLQVLQEKQQQLLKLQQQKAKLEAKLHQTTAAAAAAASAAAAAAAGPVHNAVPSNPVAAPGFFIHPSDVIPPTPKTTPLFMTPPLTPPNEAVSVVINAELAQLFPGSVIDPPAVNLAAQNKNSSKSRMNPLGSGLALAISHASHFLQPPPHQSIIIERMHSGARRFVTLDFGRPILLTDVLIPTCGDLASLSIDIWTLGEEVDGRRLVVATDISTHSLILHDLIPPPVCRFMKITVIGRYGSTNARAKIPLGFYYGHSYILPWESELKLMHDPLRGEGESASQPEIDQHLAMMVALQEDIQCRYNLACHRLEALLQSIDLPPLNSANNAQYFLRKPDKAVEEDSRVFSAYQDCIQLQLQLNLAHNAVQRLKVAIGASRKLLNETSGPEDLIQTSSTEQLRTIVRYLLDTLLSLLHSSNGHSVPAVLQSTFHAQACEELFKHLCISGTPKIRLHTGLLLVQLCGGERWWGQFLSNVLQELYNSEQLLIFPQDRVFMLLSCIGQRSLSNSGVLESLLNLLDNLLSPLQPELSMHRRTEGVLDIPMISWVVMLVSRLLDYVATVEDEAAAAKKPLNGKDRERFLTGNQWSFINNNLHTQNLNRSSKGGSSLDRLYSRKIRKQLVHHKQQLNLLKAKQKALVEQMEKEKIQSNKGSSYKLLVEQAKLKQATSKHFKDLIRLRRTAEWSRSNLDTEVTTTKESPEIEPLPFTLAHDRCISVVQKLVLFLLSMDFTCHADLLLFVCKVLARIANATRPTIHLCEIVNEPQLERLLLLLVGTDFNRGDISWGGAWAQYSLTCMLQDILAGELLAPVAAEAMEECTVSEDVGATAGDSDDSLQQSPAQLLETIDEPLTHEIAGTPPLSSLEKDKEIDLELLQDLMEVDIDPLDIDLEKDPLAAKVFKPISSTWYDYWGADYGTYNYNPYIGGLGMPVAKPPSNTEKNGSQTVSVSVSQALDARLEVGLEQQAELMLKMMSTLEADSILQALTNTSPTFSQSPTGTDDSLLGNLQPANQNSQLMIQLSSVPMLNVCFNKLFSMLQVHHVQLESLLQLWLTLSLNSSSSGNKENGADIFLYNANRIPVISLNQASIASFLTVLAWYPNTLLRTWCLVLHSLTLMTNMQLNSGSSSSIGIQETTAHLLVSDPNLIHVLVKFLSGTSPHGTNQHSPQVGPTATQAMQEFLTRLQVHLSSTCPQIFSELLLKLIHILSTERGAFQTGQGPLDAQVKLLEFTLEQNFEVVSVSTISAVIESVTFLVHHYITCSDKVMSRSGSDSSAGARACFGGLFANLIRPGDAKAVCGEMTRDQLMFDLLKLVNILVQLPLSSNREYSARVSVTTNTTDSVSDEEKVSGGKDVNGSSASTPGSPACVADLVLANQQIMSQILSALGLCNSSAMAMIIGASGLHLTKHENFHGGLDAISVGDGLFTILTTLSKKASTVHMMLQPILTYMACGYMGRQGSLATCQLSEPLLWFILRVLDTSDALKAFHDMGGVQLICNNMVTSTRAIVNTARSMVSTIMKFLDSGPNKAVDSTLKTRILASEPDNAEGIHNFAPLGTITSSSPTAQPAEVLLQATPPHRRARSAAWSYIFLPEEAWCDLTIHLPSAVLLKEIHIQPHLASLATCPSSVSVEVSADGVNMLPLSTPVVTSGLTYIKIQLVKAEVASAVCLRLHRPRDASTLGLSQIKLLGLTAFGTTSSATVNNPFLPSEDQVSKTSIGWLRLLHHCLTHISDLEGMMASAAAPTANLLQTCAALLMSPYCGMHSPNIEVVLVKIGLQSTRIGLKLIDILLRNCAASGSDPTDLNSPLLFGRLNGLSSDSTIDILYQLGTTQDPGTKDRIQALLKWVSDSAKMAALKRSGRMNYMCPSSSAVEYGLLMPSPSHLHCVAAILWHSYELLVEYDLPALLDRELFELLFNWSMSLPCNVVLKKAVDSLLCSMCHIHPNYFSLLMGWMGIIPPPVQCHHRLSMTDDSKKQDLSSSLTDDSKNAQAPLSLTESHLATLASSSQSPEAIKQLLDSGLPSLLVRSLASFCFSHISYSESIAQSVDNSQDKLRRHHVPQHCNKMPITADLVAPILRFLTEVGNSHIMKDWLGGSEVNPLWTALLFLLCHSGSTAGGHNLGAQQSSTRSASHSSATTTVLTTQQRTAIENATVAFFLQCISCHPNNQKLMAQVLCELFQTAPQRGSLPTSGNISGFVRRLFLQLMLEDEKVTMFLQSPCPLYKGRINATSHVIQHPMFGAGHKFRTLHLPVSTTLSDVLDRVSDTPSITAKLISEQKDDKEKKNHEEKEKVKAENGFQDNYSVVVASGLKSQSKRAMASTPPRPPSRRGRTIPDKIGSASSSADAASKIITVPVFHLFHRLLAGQPLPAEMTLAQLLTLLYDRKLPQGYRSIDLTVKLGSKVITDPSLSKTDSFKRLHPEKDHGDLVGSCPEDEALTPSDECMDGVLDESLLETCPIQSPLQVFAGMGGLALIAERLPMLYPEVIQQVSAPVIASTTQEKPKDSDQFEWVTIEQSGELVYEAPETIAAEPPPVKSAVQATSPIPAHSLAAFGLFLRLPGYAEVLLKERKHAQCLLRLVLGVTDDGEGSHILQSPSANVLPTLPFHVLRSLFSATPLTTDDGVLLRRMALEIGALHLILVCLSALSHHAPRVPNSSLSQTEPQVSNSHNPTSAEEQQLYWAKGTGFGTGSTASGWDVEQALTKQRLEEEHVTCLLQVLASYINPMSGAVNGEAQASPESRAQNSSALPSVLLELLSQSCLIPAMSSYLRNDSVLDMARHVPLYRALLELLRAIASCTSMVPLLLPLSTENGEEEEDEQSECQTSVGTLLAKMKTCVDTYTNRLRSKRENVKAGVKPDAPDQEPEGLALLVPDIQRTAEIVHAATANLRQANQEKKLGEYSKKVVMKPKPLSVLKSLEEKYVAVMKKLQFDTFEMVSEDDDGKLGFKVNYHYMSQVKNANDANSAARARRLAQEAVTLSTSLPLSSSSSVFVRCDEERLDIMKVLITGPADTPYANGCFEFDVYFPQDYPSSPPLVNLETTGGHSVRFNPNLYNDGKVCLSILNTWHGRPEEKWNPQTSSFLQVLVSVQSLILVAEPYFNEPGYERSRGTPSGTQSSREYDGNIRQATVKWAMLEQIRNPSPCFKEVIHKHFYLKRIELMAQCEEWIADIQQYSSDKRVGRTMSHHAAALKRHTAQLREELLKLPCPEGLDPDIEDASPVCRATAGAEDTLTHDHVNPSSSKDLPSDFQL.

WD repeat units lie at residues 71-109 (DGLH…QASA) and 110-139 (LSAK…AVGC). Residues 292–362 (RRETFTSWPH…RHSPNCPFVK (71 aa)) form a BIR repeat. 4 residues coordinate Zn(2+): Cys331, Cys334, His351, and Cys358. Residues 382–429 (LPSADGADRIACFGSGSCPQFLAAATKRGKICIWDVSKLMKVHLKFEI) form a WD 3 repeat. 3 disordered regions span residues 468–502 (DIPK…SQKE), 542–561 (GANP…KHQE), and 582–622 (ATSP…SELN). Positions 475–485 (DSDDLLEDSDS) are enriched in acidic residues. A phosphoserine mark is found at Ser476, Ser483, and Ser485. WD repeat units lie at residues 504–723 (MEVS…VQCL), 733–854 (TLCI…QHIK), 855–931 (DPQD…AKVE), and 932–970 (PPKK…FLQI). Basic and acidic residues predominate over residues 551–561 (KSEKTKEKHQE). The span at 582–591 (ATSPISSNSH) shows a compositional bias: polar residues. Phosphoserine is present on residues Ser584 and Ser593. A compositionally biased stretch (polar residues) spans 598–622 (SRTQGESISEQGSTDNESCTNSELN). Residues 1057 to 1077 (QQQRRHPQHLHQQHHGDAAQH) are disordered. A compositionally biased stretch (basic residues) spans 1060–1069 (RRHPQHLHQQ). Thr1724 is modified (phosphothreonine). Residues Ser2245 and Ser2978 each carry the phosphoserine modification. Residues 2969-2998 (VTTNTTDSVSDEEKVSGGKDVNGSSASTPG) are disordered. The interval 3212-3216 (HRRAR) is HRRAR loop; important for DIABLO/SMAC and HTRA2 binding. A Ubiquitin-like domain is found at 3842 to 4092 (DEKVTMFLQS…ESLLETCPIQ (251 aa)). 2 disordered regions span residues 3908 to 3927 (SEQK…KVKA) and 3943 to 3973 (LKSQ…IGSA). A Phosphothreonine modification is found at Thr3954. Residue Ser4047 is modified to Phosphoserine. Residues 4285–4304 (VPNSSLSQTEPQVSNSHNPT) form a disordered region. Residues 4286 to 4304 (PNSSLSQTEPQVSNSHNPT) are compositionally biased toward polar residues. The region spanning 4598–4765 (ARARRLAQEA…IRQATVKWAM (168 aa)) is the UBC core domain. The Glycyl thioester intermediate role is filled by Cys4691. Positions 4857–4882 (AGAEDTLTHDHVNPSSSKDLPSDFQL) are disordered. The span at 4869–4882 (NPSSSKDLPSDFQL) shows a compositional bias: polar residues.

The protein belongs to the BIRC6 family. As to quaternary structure, homodimer; antiparallel. Interacts with DIABLO/SMAC, likely with higher affinity to SMAC dimer than SMAC monomer; this interaction blocks the substrate-binding site and inhibits the caspase inhibition activity of BIRC6. Interacts with RNF41, KIF23/MKLP1, USP8/UBPY, BIRC5/survivin, MAP2K1/MEK1, RAB8A/RAB8, RAB11A/RAB11, PLK1, EXOC3/SEC6 and EXOC4/SEC8. Post-translationally, ubiquitinated. Ubiquitination is mediated by RNF41 E3 ligase and leads to proteasomal degradation, impairing inhibition of apoptosis. Deubiquitinated by USP8/UBPY. Autoubiquitinated; mediated by E1 ubiquitin activating enzyme UBA6. In terms of processing, proteolytically cleaved. Acts as substrate for CASP3, CASP6, CASP7, CASP9 and HTRA2. In terms of tissue distribution, widely expressed. Highly expressed in the brain and kidney.

The protein localises to the golgi apparatus. Its subcellular location is the trans-Golgi network membrane. The protein resides in the endosome. It is found in the cytoplasm. It localises to the cytoskeleton. The protein localises to the spindle pole. Its subcellular location is the microtubule organizing center. The protein resides in the centrosome. It is found in the midbody. It localises to the midbody ring. The enzyme catalyses S-ubiquitinyl-[E1 ubiquitin-activating enzyme]-L-cysteine + [acceptor protein]-L-lysine = [E1 ubiquitin-activating enzyme]-L-cysteine + N(6)-monoubiquitinyl-[acceptor protein]-L-lysine.. Inhibited by DIABLO/SMAC, which competes for the substrate-binding sites on BIRC6. BIRC6 inhibits caspases and protease by ubiquitination but BIRC6 itself is subjected to protease cleavage by CASP3, CASP6, CASP7, CASP9 and HTRA2 by protease cleavage. Functionally, anti-apoptotic protein known as inhibitor of apoptosis (IAP) which can regulate cell death by controlling caspases and by acting as an E3 ubiquitin-protein ligase. Unlike most IAPs, does not contain a RING domain and it is not a RING-type E3 ligase. Instead acts as a dual E2/E3 enzyme that combines ubiquitin conjugating (E2) and ubiquitin ligase (E3) activities in a single polypeptide. Ubiquitination is mediated by a non-canonical E1 ubiquitin activating enzyme UBA6. Ubiquitinates CASP3, CASP7 and CASP9 and inhibits their caspase activity; also ubiquitinates their procaspases but to a weaker extent. Ubiquitinates pro-apoptotic factors DIABLO/SMAC and HTRA2. DIABLO/SMAC antagonizes the caspase inhibition activity of BIRC6 by competing for the same binding sites as the caspases. Ubiquitinates the autophagy protein MAP1LC3B; this activity is also inhibited by DIABLO/SMAC. Important regulator for the final stages of cytokinesis. Crucial for normal vesicle targeting to the site of abscission, but also for the integrity of the midbody and the midbody ring, and its striking ubiquitin modification. Required for normal placenta development. This is Dual E2 ubiquitin-conjugating enzyme/E3 ubiquitin-protein ligase BIRC6 (Birc6) from Mus musculus (Mouse).